Here is a 117-residue protein sequence, read N- to C-terminus: Hydrogenase maturation factor HypA (117 aa).

His2 lines the Ni(2+) pocket. Residues Cys73, Cys76, Cys89, and Cys92 each contribute to the Zn(2+) site.

Belongs to the HypA/HybF family.

Its function is as follows. Involved in the maturation of [NiFe] hydrogenases. Required for nickel insertion into the metal center of the hydrogenase. The sequence is that of Hydrogenase maturation factor HypA from Shewanella baltica (strain OS195).